The chain runs to 783 residues: E3 UFM1-protein ligase 1 homolog (783 aa).

The disordered stretch occupies residues 404 to 482 (SNSSANFDAD…AGSSRKSVKP (79 aa)). The span at 445–457 (KSTKKHQRGRAAA) shows a compositional bias: basic residues.

The protein belongs to the UFL1 family.

Its function is as follows. E3 UFM1-protein ligase that mediates ufmylation of target proteins. This chain is E3 UFM1-protein ligase 1 homolog, found in Drosophila mojavensis (Fruit fly).